The following is a 233-amino-acid chain: Ciliary microtubule inner protein 6 (233 aa).

Basic and acidic residues-rich tracts occupy residues 1–14 (MEGEEKQQQHKTED) and 21–33 (AERKVEIKNEKSP). Positions 1–45 (MEGEEKQQQHKTEDDGIACVAERKVEIKNEKSPGKSTQHPKPCVD) are disordered. A mn region spans residues 127–159 (GIVPLTSLDVSGEHENNFVEYISFIHQYDARRT). A disordered region spans residues 192–233 (LLNTLESGSSEQPQKTDKGNSSGDKVTSPGLCQQNSQELLET). The span at 195 to 233 (TLESGSSEQPQKTDKGNSSGDKVTSPGLCQQNSQELLET) shows a compositional bias: polar residues.

It localises to the cell projection. Its subcellular location is the cilium. The chain is Ciliary microtubule inner protein 6 (Cimip6) from Mus musculus (Mouse).